The primary structure comprises 304 residues: MTDTTINNADKVAPTLVARVLNEALPYIRRFSGKTIVVKFGGNAMVDDALKQSFARDIVLMKLVGFNPVVVHGGGPQIGKLLERIGKHTEFVQGMRVTDAETMDVVEMVLGGLVNKEIVNLINSQGGRAVGLTGKDGGMIRARRLRLSHQDAAEQPPEIIDIGHVGEVEHIDPSVVDMLDHGAFIPVIAPIGVGEDGLSYNINADLVAGKIAEVLEAEKLMLLTNTPGVLSKQGELLTGLNPARVDALIQDGTIAGGMLPKIRCALDAVAGGVNAAHIIDGRVEHACLLELFTDAGVGTLIQRR.

Residues 74–75 (GG), Arg96, and Asn201 contribute to the substrate site.

It belongs to the acetylglutamate kinase family. ArgB subfamily.

It localises to the cytoplasm. The enzyme catalyses N-acetyl-L-glutamate + ATP = N-acetyl-L-glutamyl 5-phosphate + ADP. It functions in the pathway amino-acid biosynthesis; L-arginine biosynthesis; N(2)-acetyl-L-ornithine from L-glutamate: step 2/4. In terms of biological role, catalyzes the ATP-dependent phosphorylation of N-acetyl-L-glutamate. The sequence is that of Acetylglutamate kinase from Alkalilimnicola ehrlichii (strain ATCC BAA-1101 / DSM 17681 / MLHE-1).